We begin with the raw amino-acid sequence, 345 residues long: MTQITLLTPDDWHLHFRDGDMLQETVPATARLFQRAIVMPNLLPPVTDAKMVTEYRERILAARPAGSTFEPLMTIFLTNNTTEQDIIDAKAAGVVAAKLYPAGATTNSDAAVKALDALFPVFEAMAKHGMLLLVHGEVTESHIDIFDREAMFIERYLARIVAAFPALKVVFEHITTKDAADFVMSAPDNVAATITPQHLLLNRNDLLVGGVRPHNFCLPVLKRSTHQEALRAVIATGSSKFFLGTDSAPHEKHRKESACGCAGCYSAWSALELYAQVFDDLGALDKLEGFASLHGPDFYGLPRNTSTVTLVKEKWTVPSEIILPNGNPIVPFFAGEEVNWKVKNA.

Zn(2+)-binding residues include His-13 and His-15. Substrate is bound by residues 15–17 (HFR) and Asn-41. Zn(2+)-binding residues include Lys-98, His-135, and His-173. Position 98 is an N6-carboxylysine (Lys-98). His-135 provides a ligand contact to substrate. Residue Leu-218 coordinates substrate. Asp-246 serves as a coordination point for Zn(2+). Asp-246 is an active-site residue. Residues His-250 and Ala-262 each coordinate substrate.

Belongs to the metallo-dependent hydrolases superfamily. DHOase family. Class II DHOase subfamily. As to quaternary structure, homodimer. Requires Zn(2+) as cofactor.

It carries out the reaction (S)-dihydroorotate + H2O = N-carbamoyl-L-aspartate + H(+). It participates in pyrimidine metabolism; UMP biosynthesis via de novo pathway; (S)-dihydroorotate from bicarbonate: step 3/3. In terms of biological role, catalyzes the reversible cyclization of carbamoyl aspartate to dihydroorotate. This chain is Dihydroorotase, found in Shewanella halifaxensis (strain HAW-EB4).